The following is a 220-amino-acid chain: U1 small nuclear ribonucleoprotein C (220 aa).

The Matrin-type zinc-finger motif lies at 4-36; the sequence is YYCDYCDIYLTHDSMNARKAHNSGRNHVANVRD. 2 stretches are compositionally biased toward pro residues: residues 88–130 and 147–165; these read PGPP…PFLP and PPFP…PFRP. The segment at 88-220 is disordered; that stretch reads PGPPPPGAFP…HPDRLRMLGQ (133 aa). Residues 166–200 show a composition bias toward low complexity; it reads PMGMGMPPAPAQAQAQGSPMGMPQQGQQGTFTPTQ. Residues 211–220 show a composition bias toward basic and acidic residues; it reads HPDRLRMLGQ.

This sequence belongs to the U1 small nuclear ribonucleoprotein C family. In terms of assembly, U1 snRNP is composed of the 7 core Sm proteins B/B', D1, D2, D3, E, F and G that assemble in a heptameric protein ring on the Sm site of the small nuclear RNA to form the core snRNP, and at least 3 U1 snRNP-specific proteins U1-70K, U1-A and U1-C. U1-C interacts with U1 snRNA and the 5' splice-site region of the pre-mRNA.

The protein localises to the nucleus. Component of the spliceosomal U1 snRNP, which is essential for recognition of the pre-mRNA 5' splice-site and the subsequent assembly of the spliceosome. U1-C is directly involved in initial 5' splice-site recognition for both constitutive and regulated alternative splicing. The interaction with the 5' splice-site seems to precede base-pairing between the pre-mRNA and the U1 snRNA. Stimulates commitment or early (E) complex formation by stabilizing the base pairing of the 5' end of the U1 snRNA and the 5' splice-site region. In Cryptococcus neoformans var. neoformans serotype D (strain JEC21 / ATCC MYA-565) (Filobasidiella neoformans), this protein is U1 small nuclear ribonucleoprotein C.